The following is a 430-amino-acid chain: Aspartate--tRNA(Asp/Asn) ligase (430 aa).

L-aspartate is bound at residue E166. Positions 188 to 191 (QLYK) are aspartate. R210 is an L-aspartate binding site. Residues 210–212 (RAE), 218–220 (KHL), and E353 contribute to the ATP site. Positions 353 and 356 each coordinate Mg(2+). The L-aspartate site is built by S356 and R360. 401 to 404 (GAER) is an ATP binding site.

Belongs to the class-II aminoacyl-tRNA synthetase family. Type 2 subfamily. Homodimer. Mg(2+) is required as a cofactor.

Its subcellular location is the cytoplasm. The catalysed reaction is tRNA(Asx) + L-aspartate + ATP = L-aspartyl-tRNA(Asx) + AMP + diphosphate. Aspartyl-tRNA synthetase with relaxed tRNA specificity since it is able to aspartylate not only its cognate tRNA(Asp) but also tRNA(Asn). Reaction proceeds in two steps: L-aspartate is first activated by ATP to form Asp-AMP and then transferred to the acceptor end of tRNA(Asp/Asn). This chain is Aspartate--tRNA(Asp/Asn) ligase, found in Methanospirillum hungatei JF-1 (strain ATCC 27890 / DSM 864 / NBRC 100397 / JF-1).